An 83-amino-acid chain; its full sequence is Defensin-1 (83 aa).

The first 33 residues, 1-33, serve as a signal peptide directing secretion; the sequence is MAGKGVGSRLSTLFLLVLLVITIGMMQVQVAEG. 4 cysteine pairs are disulfide-bonded: Cys-36–Cys-82, Cys-47–Cys-67, Cys-53–Cys-76, and Cys-57–Cys-78.

Belongs to the DEFL family.

Its subcellular location is the secreted. Its function is as follows. Plant defense peptide. Has antifungal activity against B.cinera, F.oxysporum, F.solani and H.annosum with IC(50) values of 0.4 ug/ml, 2.9 ug/ml, 0.9 ug/ml and 1.4 ug/ml, respectively. Has modest antifungal activity against C.albicans and T.reesei. Causes thickening of F.oxysporum hyphae and an increase in their branching. Lacks antibacterial activity against the Gram-negative bacteria E.coli and E.carotovora. This chain is Defensin-1, found in Pinus sylvestris (Scotch pine).